The chain runs to 375 residues: ORC1-type DNA replication protein 3 (375 aa).

Residues 66–70 (TGKTT), Tyr209, and Arg221 each bind ATP.

Belongs to the CDC6/cdc18 family.

Functionally, involved in regulation of DNA replication. The protein is ORC1-type DNA replication protein 3 (cdc6c) of Haloarcula marismortui (strain ATCC 43049 / DSM 3752 / JCM 8966 / VKM B-1809) (Halobacterium marismortui).